A 758-amino-acid polypeptide reads, in one-letter code: General transcription and DNA repair factor IIH helicase subunit XPD (758 aa).

One can recognise a Helicase ATP-binding domain in the interval 7-285 (DVTVYFPYDN…TDAGRLRAEY (279 aa)). 42 to 49 (MPTGTGKT) is an ATP binding site. Positions 116, 134, 155, and 190 each coordinate [4Fe-4S] cluster. A DEAH box motif is present at residues 234–238 (DEAHN).

It belongs to the helicase family. RAD3/XPD subfamily. In terms of assembly, component of the 7-subunit TFIIH core complex composed of XPB, XPD, TFB1/GTF2H1, GTF2H2/P44, TFB4/GTF2H3, TFB2/GTF2H4 and TFB5/GTF2H5, which is active in NER. The core complex associates with the 3-subunit CDK-activating kinase (CAK) module composed of CYCH1/cyclin H1, CDKD and MAT1/At4g30820 to form the 10-subunit holoenzyme (holo-TFIIH) active in transcription. Interacts with GTF2H2/p44. [4Fe-4S] cluster serves as cofactor. Expressed at low levels in all tissues.

The protein resides in the nucleus. The enzyme catalyses Couples ATP hydrolysis with the unwinding of duplex DNA at the replication fork by translocating in the 5'-3' direction. This creates two antiparallel DNA single strands (ssDNA). The leading ssDNA polymer is the template for DNA polymerase III holoenzyme which synthesizes a continuous strand.. It carries out the reaction ATP + H2O = ADP + phosphate + H(+). In terms of biological role, ATP-dependent 5'-3' DNA helicase, component of the general transcription and DNA repair factor IIH (TFIIH) core complex, which is involved in general and transcription-coupled nucleotide excision repair (NER) of damaged DNA and, when complexed to CDK-activating kinase (CAK), involved in transcription by RNA polymerase II. In NER, TFIIH acts by opening DNA around the lesion to allow the excision of the damaged oligonucleotide and its replacement by a new DNA fragment. The ATP-dependent helicase activity of XPD is required for DNA opening. In transcription, TFIIH has an essential role in transcription initiation. When the pre-initiation complex (PIC) has been established, TFIIH is required for promoter opening and promoter escape. Phosphorylation of the C-terminal tail (CTD) of the largest subunit of RNA polymerase II by the kinase module CAK controls the initiation of transcription. XPD acts by forming a bridge between CAK and the core-TFIIH complex. Essential during plant growth. May negatively regulate a common response program mediated by UV damage and heat stress, that leads to tissue death and reduced chloroplast function. The chain is General transcription and DNA repair factor IIH helicase subunit XPD from Arabidopsis thaliana (Mouse-ear cress).